We begin with the raw amino-acid sequence, 210 residues long: Adenylate kinase (210 aa).

Residue 10 to 15 (GSGKGT) coordinates ATP. The interval 30 to 54 (SCGDILRKQNKCCDINKLIKKGELI) is NMP. AMP-binding positions include Arg36, 52–54 (ELI), 80–83 (GFPR), and Gln87. The interval 117 to 154 (GRIIDKVSGEIYHLKFNPPKFITEKSNKNKILVRRLDD) is LID. ATP is bound by residues Arg118 and 127–128 (IY). AMP contacts are provided by Arg151 and Arg162. Phe195 provides a ligand contact to ATP.

The protein belongs to the adenylate kinase family. In terms of assembly, monomer.

It localises to the cytoplasm. It carries out the reaction AMP + ATP = 2 ADP. It participates in purine metabolism; AMP biosynthesis via salvage pathway; AMP from ADP: step 1/1. Catalyzes the reversible transfer of the terminal phosphate group between ATP and AMP. Plays an important role in cellular energy homeostasis and in adenine nucleotide metabolism. The sequence is that of Adenylate kinase from Wigglesworthia glossinidia brevipalpis.